The primary structure comprises 215 residues: Pyridoxine/pyridoxamine 5'-phosphate oxidase (215 aa).

Substrate-binding positions include 9 to 12 (RRDY) and Lys69. FMN contacts are provided by residues 64–69 (RILLLK), 79–80 (FT), Lys86, and Gln108. Substrate-binding residues include Tyr126, Arg130, and Ser134. FMN-binding positions include 143–144 (QS) and Trp188. 194-196 (RLH) contacts substrate. FMN is bound at residue Arg198.

This sequence belongs to the pyridoxamine 5'-phosphate oxidase family. Homodimer. FMN serves as cofactor.

The enzyme catalyses pyridoxamine 5'-phosphate + O2 + H2O = pyridoxal 5'-phosphate + H2O2 + NH4(+). It carries out the reaction pyridoxine 5'-phosphate + O2 = pyridoxal 5'-phosphate + H2O2. It participates in cofactor metabolism; pyridoxal 5'-phosphate salvage; pyridoxal 5'-phosphate from pyridoxamine 5'-phosphate: step 1/1. Its pathway is cofactor metabolism; pyridoxal 5'-phosphate salvage; pyridoxal 5'-phosphate from pyridoxine 5'-phosphate: step 1/1. Catalyzes the oxidation of either pyridoxine 5'-phosphate (PNP) or pyridoxamine 5'-phosphate (PMP) into pyridoxal 5'-phosphate (PLP). The polypeptide is Pyridoxine/pyridoxamine 5'-phosphate oxidase (Pseudomonas fluorescens (strain ATCC BAA-477 / NRRL B-23932 / Pf-5)).